The following is a 192-amino-acid chain: Mitochondrial import inner membrane translocase subunit Tim22 (192 aa).

Cystine bridges form between C67–C139 and C158–C177. The next 3 membrane-spanning stretches (helical) occupy residues 72–92 (VLACVGGFVLGGAFGVFTAGI), 123–141 (YAKNFAIVGAMFSCTECLV), and 168–188 (AGVKAGAIGCGGFAAFSAAID).

The protein belongs to the Tim17/Tim22/Tim23 family. In terms of assembly, component of the TIM22 complex, whose core is composed of TIMM22, associated with peripheral protein FXC1/TIMM10B and the 70 kDa heterohexamer. In most cases, the 70 kDa complex is composed of TIMM9 and TIMM10 (TIMM10A or TIMM10B). A small fraction of the 70 kDa complex is composed of TIMM8 (TIMM8A/DDP1 or TIMM8B/DDP2) and TIMM13. The TIM22 complex also contains AGK and TIMM29. Interacts directly with TIMM9, TIMM10A and FXC1/TIMM10B. Interacts (when oxidized) with TIMM29; interaction is direct. In terms of processing, disulfide bonds promote efficient assembly of the TIM22 complex.

The protein localises to the mitochondrion inner membrane. In terms of biological role, essential core component of the TIM22 complex, a complex that mediates the import and insertion of multi-pass transmembrane proteins into the mitochondrial inner membrane. In the TIM22 complex, it constitutes the voltage-activated and signal-gated channel. Forms a twin-pore translocase that uses the membrane potential as external driving force in 2 voltage-dependent steps. In Rattus norvegicus (Rat), this protein is Mitochondrial import inner membrane translocase subunit Tim22 (Timm22).